Reading from the N-terminus, the 361-residue chain is Polyribonucleotide 5'-hydroxyl-kinase PH0197 (361 aa).

43 to 50 (GDVDTGKT) contacts ATP.

A divalent metal cation serves as cofactor.

The enzyme catalyses a 5'-end dephospho-2'-deoxyribonucleoside-DNA + ATP = a 5'-end 5'-phospho-2'-deoxyribonucleoside-DNA + ADP + H(+). It carries out the reaction a 5'-end dephospho-ribonucleoside-RNA + ATP = a 5'-end 5'-phospho-ribonucleoside-RNA + ADP + H(+). With respect to regulation, DNA kinase activity is inhibited by 250 mM sodium chloride whereas RNA kinase activity is unaffected. Its function is as follows. Polynucleotide kinase that can phosphorylate the 5'-hydroxyl groups of both single-stranded RNA (ssRNA) and single-stranded DNA (ssDNA). Exhibits a strong preference for ssRNA. This chain is Polyribonucleotide 5'-hydroxyl-kinase PH0197, found in Pyrococcus horikoshii (strain ATCC 700860 / DSM 12428 / JCM 9974 / NBRC 100139 / OT-3).